A 609-amino-acid chain; its full sequence is Zinc metalloproteinase-disintegrin-like VMP-III (609 aa).

The signal sequence occupies residues 1–20; that stretch reads MIQVLLVTICLAAFPYQGSS. Residues 21 to 189 constitute a propeptide that is removed on maturation; it reads IILESGNVND…KKASQLVVTA (169 aa). The Peptidase M12B domain occupies 198-393; it reads RFVELFLVVD…HNPECILNEP (196 aa). Glutamate 201 and aspartate 285 together coordinate Ca(2+). 3 disulfide bridges follow: cysteine 308/cysteine 388, cysteine 348/cysteine 372, and cysteine 350/cysteine 355. Histidine 333 contacts Zn(2+). Residue glutamate 334 is part of the active site. Histidine 337 and histidine 343 together coordinate Zn(2+). Residue asparagine 371 is glycosylated (N-linked (GlcNAc...) asparagine). Ca(2+) is bound by residues cysteine 388, asparagine 391, valine 403, asparagine 406, leucine 408, glutamate 410, glutamate 413, and aspartate 416. The Disintegrin domain maps to 401-487; it reads PPVCGNELLE…ECPADVFHKN (87 aa). 14 disulfide bridges follow: cysteine 404-cysteine 433, cysteine 415-cysteine 428, cysteine 417-cysteine 423, cysteine 427-cysteine 450, cysteine 441-cysteine 447, cysteine 446-cysteine 472, cysteine 459-cysteine 479, cysteine 466-cysteine 498, cysteine 491-cysteine 503, cysteine 510-cysteine 560, cysteine 525-cysteine 571, cysteine 538-cysteine 548, cysteine 555-cysteine 597, and cysteine 591-cysteine 602. Residues 465 to 467 carry the D/ECD-tripeptide motif; sequence ECD. Ca(2+) is bound by residues aspartate 467, proline 468, glutamate 470, aspartate 482, and valine 483.

It belongs to the venom metalloproteinase (M12B) family. P-III subfamily. P-IIIa sub-subfamily. In terms of assembly, monomer. Zn(2+) is required as a cofactor. As to expression, expressed by the venom gland.

The protein localises to the secreted. Its function is as follows. Snake venom metalloproteinase that impairs hemostasis in the envenomed animal. This is Zinc metalloproteinase-disintegrin-like VMP-III from Crotalus viridis viridis (Prairie rattlesnake).